The sequence spans 323 residues: Methionine adenosyltransferase 2 subunit beta (323 aa).

Residues 26–29 (TGLL), 49–51 (YNR), 60–61 (NL), C82, R86, Y146, and L172 each bind NADP(+). Residues 308 to 323 (LWPFQHDKRWRQTVFH) form a required for interaction with MAT2A region.

It belongs to the dTDP-4-dehydrorhamnose reductase family. MAT2B subfamily. In terms of assembly, heterotrimer; composed of a catalytic mat2a homodimer that binds one regulatory mat2b chain. Heterohexamer; composed of a central, catalytic mat2a homotetramer flanked on either side by a regulatory mat2b chain. NADP binding increases the affinity for mat2a.

It participates in amino-acid biosynthesis; S-adenosyl-L-methionine biosynthesis; S-adenosyl-L-methionine from L-methionine: step 1/1. In terms of biological role, regulatory subunit of S-adenosylmethionine synthetase 2, an enzyme that catalyzes the formation of S-adenosylmethionine from methionine and ATP. Regulates MAT2A catalytic activity by changing its kinetic properties, increasing its affinity for L-methionine. Can bind NADP (in vitro). This chain is Methionine adenosyltransferase 2 subunit beta (mat2b), found in Danio rerio (Zebrafish).